The sequence spans 56 residues: UPF0434 protein Ecaj_0131 (56 aa).

Belongs to the UPF0434 family.

The chain is UPF0434 protein Ecaj_0131 from Ehrlichia canis (strain Jake).